The following is a 428-amino-acid chain: Homocitrate synthase, cytosolic isozyme (428 aa).

Positions 23–276 (FQLIDSTLRE…KSKYKLHKIR (254 aa)) constitute a Pyruvate carboxyltransferase domain. 2-oxoglutarate is bound at residue Arg31. Glu32 contributes to the Mg(2+) binding site. 2-oxoglutarate contacts are provided by His91, Arg151, and Thr185. Positions 212 and 214 each coordinate Mg(2+). The Proton acceptor role is filled by His309. Ser385 is modified (phosphoserine). At Thr396 the chain carries Phosphothreonine. Residues 399–428 (VLSAKKNKKNDSDVPELATIPAAKRTKPSA) are disordered. Residues Ser401 and Ser410 each carry the phosphoserine modification.

Belongs to the alpha-IPM synthase/homocitrate synthase family. Homocitrate synthase LYS20/LYS21 subfamily. Mg(2+) serves as cofactor. Mn(2+) is required as a cofactor.

Its subcellular location is the cytoplasm. The enzyme catalyses acetyl-CoA + 2-oxoglutarate + H2O = (2R)-homocitrate + CoA + H(+). The protein operates within amino-acid biosynthesis; L-lysine biosynthesis via AAA pathway; L-alpha-aminoadipate from 2-oxoglutarate: step 1/5. Its function is as follows. Catalyzes the aldol-type condensation of 2-oxoglutarate with acetyl-CoA to yield homocitrate. Carries out the first step of the alpha-aminoadipate (AAA) lysine biosynthesis pathway. This Saccharomyces cerevisiae (strain ATCC 204508 / S288c) (Baker's yeast) protein is Homocitrate synthase, cytosolic isozyme (LYS20).